The following is a 122-amino-acid chain: Large ribosomal subunit protein uL14 (122 aa).

This sequence belongs to the universal ribosomal protein uL14 family. As to quaternary structure, part of the 50S ribosomal subunit. Forms a cluster with proteins L3 and L19. In the 70S ribosome, L14 and L19 interact and together make contacts with the 16S rRNA in bridges B5 and B8.

Binds to 23S rRNA. Forms part of two intersubunit bridges in the 70S ribosome. The chain is Large ribosomal subunit protein uL14 from Psychromonas ingrahamii (strain DSM 17664 / CCUG 51855 / 37).